The following is a 134-amino-acid chain: 10 kDa prolamin (134 aa).

A signal peptide spans 1-24 (MAAYTSKIFALFALIALSASATTA). Residues 69-76 (QQQCCMQL) are octapeptide unique to cereal prolamins.

This sequence belongs to the prolamin family.

The protein localises to the vacuole. The protein resides in the aleurone grain. Its function is as follows. Seed storage protein; serves as a source of nitrogen, carbon and sulfur for the young developing seedling. The polypeptide is 10 kDa prolamin (Oryza sativa subsp. indica (Rice)).